Here is a 664-residue protein sequence, read N- to C-terminus: Cyclic nucleotide-gated channel alpha-2 (664 aa).

Residues 1–10 (MMTEKSNGVK) show a composition bias toward polar residues. The disordered stretch occupies residues 1 to 61 (MMTEKSNGVK…LQRLAEMDTP (61 aa)). At 1 to 146 (MMTEKSNGVK…PAGDWYYRWL (146 aa)) the chain is on the cytoplasmic side. A helical membrane pass occupies residues 147–168 (FVIAMPVLYNWCLLVARACFSD). At 169-178 (LQRNYFVVWL) the chain is on the extracellular side. The chain crosses the membrane as a helical span at residues 179 to 199 (VLDYFSDTVYIADLIIRLRTG). The Cytoplasmic portion of the chain corresponds to 200–224 (FLEQGLLVKDPKKLRDNYIHTLQFK). The helical transmembrane segment at 225 to 243 (LDVASIIPTDLIYFAVGIH) threads the bilayer. Residues 244–248 (SPEVR) are Extracellular-facing. The helical transmembrane segment at 249-267 (FNRLLHFARMFEFFDRTET) threads the bilayer. Over 268-274 (RTSYPNI) the chain is Cytoplasmic. Residues 272-380 (PNIFRISNLV…GNVGSMISNM (109 aa)) form an ion conduction pathway region. Residues 275–298 (FRISNLVLYILVIIHWNACIYYAI) form a helical membrane-spanning segment. Residues 299–321 (SKSIGFGVDTWVYPNITDPEYGY) lie on the Extracellular side of the membrane. 2 consecutive transmembrane segments (helical) span residues 322-356 (LARE…LFVI) and 357-381 (FDFL…SNMN). A selectivity filter region spans residues 339–342 (TIGE). Residues 382–458 (ATRAEFQAKI…STLKKVRIFQ (77 aa)) form a C-linker region. The Cytoplasmic portion of the chain corresponds to 382–664 (ATRAEFQAKI…INTPEPAVAE (283 aa)). Residues 462–582 (AGLLVELVLK…EERGREILMK (121 aa)) form a cyclic nucleotide-binding domain region. Gly522, Ser525, Arg538, and Thr539 together coordinate 3',5'-cyclic GMP. Positions 538 and 539 each coordinate 3',5'-cyclic AMP. Residues 599–653 (VQEKLEQLETNMETLYTRFARLLAEYTGAQQKLKQRITVLETKMKQNHEDDYLSD) adopt a coiled-coil conformation.

Belongs to the cyclic nucleotide-gated cation channel (TC 1.A.1.5) family. CNGA2 subfamily. The olfactory cyclic nucleotide-gated channel is an heterotetramer composed of CNGA2, CNGA4 and CNGB1b subunits with 2:1:1 stoichiometry.

Its subcellular location is the cell projection. It localises to the cilium membrane. It catalyses the reaction Ca(2+)(in) = Ca(2+)(out). It carries out the reaction Na(+)(in) = Na(+)(out). The enzyme catalyses K(+)(in) = K(+)(out). The catalysed reaction is NH4(+)(in) = NH4(+)(out). It catalyses the reaction Rb(+)(in) = Rb(+)(out). It carries out the reaction Li(+)(in) = Li(+)(out). The enzyme catalyses Cs(+)(in) = Cs(+)(out). In terms of biological role, pore-forming subunit of the olfactory cyclic nucleotide-gated channel. Operates in the cilia of olfactory sensory neurons where chemical stimulation of the odorant is converted to an electrical signal. Mediates odorant-induced cAMP-dependent Ca(2+) influx triggering neuron depolarization. The rise of intracellular Ca(2+) levels potentiates the olfactory response by activating Ca(2+)-dependent Cl(-) channels, but it also serves as a negative feedback signal to desensitize the channel for rapid adaptation to odorants. Conducts cAMP- and cGMP-gated ion currents, with permeability for monovalent and divalent cations. The sequence is that of Cyclic nucleotide-gated channel alpha-2 from Mus musculus (Mouse).